Consider the following 218-residue polypeptide: Superoxide dismutase [Mn], mitochondrial (218 aa).

Residues 1–21 (MLRFLSKNSVAAIRNVSIARG) constitute a mitochondrion transit peptide. H50 and H96 together coordinate Mn(2+). S129 bears the Phosphoserine mark. 2 residues coordinate Mn(2+): D181 and H185.

The protein belongs to the iron/manganese superoxide dismutase family. In terms of assembly, homodimer. The cofactor is Mn(2+).

The protein localises to the mitochondrion matrix. The catalysed reaction is 2 superoxide + 2 H(+) = H2O2 + O2. Functionally, destroys superoxide anion radicals which are normally produced within the cells and which are toxic to biological systems. The chain is Superoxide dismutase [Mn], mitochondrial (sod2) from Schizosaccharomyces pombe (strain 972 / ATCC 24843) (Fission yeast).